The following is a 115-amino-acid chain: Synaptobrevin homolog 2 (115 aa).

Low complexity predominate over residues Met-1–Ser-16. The disordered stretch occupies residues Met-1 to Thr-28. The Cytoplasmic portion of the chain corresponds to Met-1–Met-93. A compositionally biased stretch (polar residues) spans Asn-17–Thr-28. The v-SNARE coiled-coil homology domain occupies Lys-27 to Lys-87. Ser-58 carries the phosphoserine modification. Residue Lys-62 forms a Glycyl lysine isopeptide (Lys-Gly) (interchain with G-Cter in ubiquitin) linkage. Cys-94 carries the S-palmitoyl cysteine lipid modification. A helical; Anchor for type IV membrane protein membrane pass occupies residues Cys-94–Val-112. Residues His-113–Ser-115 are Vesicular-facing.

Belongs to the synaptobrevin family. Post-translationally, palmitoylated by SWF1.

The protein localises to the endomembrane system. SNC1 and SNC2 are vesicle-targeting proteins essential for normal secretory traffic between the Golgi and the plasma membrane. They may also be involved in vesicle fusion. The sequence is that of Synaptobrevin homolog 2 (SNC2) from Saccharomyces cerevisiae (strain ATCC 204508 / S288c) (Baker's yeast).